A 335-amino-acid chain; its full sequence is Tryptophan--tRNA ligase (335 aa).

ATP-binding positions include Gln-13–Ser-15 and Gly-21–Asn-22. The short motif at Pro-14–Asn-22 is the 'HIGH' region element. Asp-136 provides a ligand contact to L-tryptophan. ATP is bound by residues Gly-148 to Asp-150, Ile-187, and Lys-196 to Ser-200. The 'KMSKS' region motif lies at Lys-196–Ser-200.

The protein belongs to the class-I aminoacyl-tRNA synthetase family. Homodimer.

The protein resides in the cytoplasm. The enzyme catalyses tRNA(Trp) + L-tryptophan + ATP = L-tryptophyl-tRNA(Trp) + AMP + diphosphate + H(+). Functionally, catalyzes the attachment of tryptophan to tRNA(Trp). In Buchnera aphidicola subsp. Acyrthosiphon pisum (strain APS) (Acyrthosiphon pisum symbiotic bacterium), this protein is Tryptophan--tRNA ligase.